A 284-amino-acid chain; its full sequence is Co-chaperone protein DjlA (284 aa).

Topologically, residues methionine 1 to lysine 6 are periplasmic. Residues isoleucine 7–histidine 30 traverse the membrane as a helical segment. Topologically, residues glutamine 31–lysine 284 are cytoplasmic. One can recognise a J domain in the interval aspartate 218–lysine 284.

Homodimer.

The protein localises to the cell inner membrane. In terms of biological role, regulatory DnaK co-chaperone. Direct interaction between DnaK and DjlA is needed for the induction of the wcaABCDE operon, involved in the synthesis of a colanic acid polysaccharide capsule, possibly through activation of the RcsB/RcsC phosphotransfer signaling pathway. The colanic acid capsule may help the bacterium survive conditions outside the host. The polypeptide is Co-chaperone protein DjlA (Vibrio parahaemolyticus serotype O3:K6 (strain RIMD 2210633)).